Reading from the N-terminus, the 362-residue chain is Phospho-N-acetylmuramoyl-pentapeptide-transferase (362 aa).

Helical transmembrane passes span 28–48, 72–92, 94–114, 131–151, 169–189, 200–220, 236–256, 264–284, 290–310, and 339–359; these read IISFLSALFISLGIGHCVITW, TPTMGGIVLILSIVISVMVCA, LSNIYVWYVFFILITYGILGL, VLHKYFWQSLIALTLVIIIFM, FMPQLGIWYIFLAYFVVVGTS, GLAIMPIMFVAAGLAVVAWIS, FSGELIIICSAIIGAGLGFLW, IFMGDVGSLSLGGTLGIIAVL, LLLIMGGMFVIETLSVILQVI, and IIVRFWIISLMLVFVGLITLK.

It belongs to the glycosyltransferase 4 family. MraY subfamily. Mg(2+) serves as cofactor.

The protein localises to the cell inner membrane. It catalyses the reaction UDP-N-acetyl-alpha-D-muramoyl-L-alanyl-gamma-D-glutamyl-meso-2,6-diaminopimeloyl-D-alanyl-D-alanine + di-trans,octa-cis-undecaprenyl phosphate = di-trans,octa-cis-undecaprenyl diphospho-N-acetyl-alpha-D-muramoyl-L-alanyl-D-glutamyl-meso-2,6-diaminopimeloyl-D-alanyl-D-alanine + UMP. It participates in cell wall biogenesis; peptidoglycan biosynthesis. Functionally, catalyzes the initial step of the lipid cycle reactions in the biosynthesis of the cell wall peptidoglycan: transfers peptidoglycan precursor phospho-MurNAc-pentapeptide from UDP-MurNAc-pentapeptide onto the lipid carrier undecaprenyl phosphate, yielding undecaprenyl-pyrophosphoryl-MurNAc-pentapeptide, known as lipid I. In Blochmanniella pennsylvanica (strain BPEN), this protein is Phospho-N-acetylmuramoyl-pentapeptide-transferase.